The following is a 468-amino-acid chain: FAD-linked oxidoreductase hasG (468 aa).

Residues 37-211 (LGKIPAAVVQ…VEATFRAYPW (175 aa)) enclose the FAD-binding PCMH-type domain.

This sequence belongs to the oxygen-dependent FAD-linked oxidoreductase family. The cofactor is FAD.

It functions in the pathway secondary metabolite biosynthesis. FAD-linked oxidoreductase; part of the gene cluster that mediates the biosynthesis of hexadehydro-astechrome (HAS), a tryptophan-derived iron(III)-complex that acts as a virulence factor in infected mice. Within the pathway, hasG converts the prenyl to a methylbutadienyl side chain. The HAS biosynthesis begins with the synthesis of a tethered Trp-Ala dipeptide by the NRPS hasD. The 7-dimethylallyltryptophan synthase hasE then catalyzes the prenylation of the hasD-tethered tryptophan or the resulting tethered Trp-Ala dipeptide at the C-7 position of the indole moiety. HAS biosynthesis continues via tethered intermediates with the succesive actions of the cytochrome P450 monooxygenase hasH, the O-methyltransferase hasC, and the FAD-linked oxidoreductase hasG. The resulting O-methylated diketopiperazine is then released from hasD. Finally, three O-methylated diketopiperazine molecules assemble in a trimeric complex with Fe(III) to produce hexadehydro-astechrome. The sequence is that of FAD-linked oxidoreductase hasG from Aspergillus fumigatus (strain CBS 144.89 / FGSC A1163 / CEA10) (Neosartorya fumigata).